The primary structure comprises 168 residues: Probable chorismate pyruvate-lyase (168 aa).

The substrate site is built by R75, I114, and E155.

This sequence belongs to the UbiC family.

It is found in the cytoplasm. The catalysed reaction is chorismate = 4-hydroxybenzoate + pyruvate. The protein operates within cofactor biosynthesis; ubiquinone biosynthesis. In terms of biological role, removes the pyruvyl group from chorismate, with concomitant aromatization of the ring, to provide 4-hydroxybenzoate (4HB) for the ubiquinone pathway. The chain is Probable chorismate pyruvate-lyase from Psychrobacter arcticus (strain DSM 17307 / VKM B-2377 / 273-4).